The chain runs to 446 residues: Exodeoxyribonuclease 7 large subunit (446 aa).

It belongs to the XseA family. In terms of assembly, heterooligomer composed of large and small subunits.

It is found in the cytoplasm. The catalysed reaction is Exonucleolytic cleavage in either 5'- to 3'- or 3'- to 5'-direction to yield nucleoside 5'-phosphates.. Its function is as follows. Bidirectionally degrades single-stranded DNA into large acid-insoluble oligonucleotides, which are then degraded further into small acid-soluble oligonucleotides. The protein is Exodeoxyribonuclease 7 large subunit of Geotalea uraniireducens (strain Rf4) (Geobacter uraniireducens).